Consider the following 181-residue polypeptide: GTPase RhebL1 (181 aa).

GTP contacts are provided by residues 30–36 (LEDYDPT), glycine 61, 117–120 (NKAD), and 147–148 (SA). The Effector region signature appears at 33–41 (YDPTVENTY). Residue threonine 36 coordinates Mg(2+). Position 178 is a cysteine methyl ester (cysteine 178). A lipid anchor (S-farnesyl cysteine) is attached at cysteine 178. Positions 179–181 (HLM) are cleaved as a propeptide — removed in mature form.

It belongs to the small GTPase superfamily. Rheb family. As to quaternary structure, interacts with MTOR.

The protein resides in the endomembrane system. The protein localises to the cytoplasm. The catalysed reaction is GTP + H2O = GDP + phosphate + H(+). Functionally, binds GTP and exhibits intrinsic GTPase activity. May activate NF-kappa-B-mediated gene transcription. Promotes signal transduction through MTOR, activates RPS6KB1, and is a downstream target of the small GTPase-activating proteins TSC1 and TSC2. The protein is GTPase RhebL1 (RHEBL1) of Bos taurus (Bovine).